The chain runs to 320 residues: Aspartate carbamoyltransferase catalytic subunit (320 aa).

2 residues coordinate carbamoyl phosphate: Arg68 and Thr69. L-aspartate is bound at residue Lys96. Residues Arg118, His148, and Gln151 each contribute to the carbamoyl phosphate site. L-aspartate-binding residues include Arg181 and Arg236. Positions 277 and 278 each coordinate carbamoyl phosphate.

Belongs to the aspartate/ornithine carbamoyltransferase superfamily. ATCase family. As to quaternary structure, heterododecamer (2C3:3R2) of six catalytic PyrB chains organized as two trimers (C3), and six regulatory PyrI chains organized as three dimers (R2).

It catalyses the reaction carbamoyl phosphate + L-aspartate = N-carbamoyl-L-aspartate + phosphate + H(+). The protein operates within pyrimidine metabolism; UMP biosynthesis via de novo pathway; (S)-dihydroorotate from bicarbonate: step 2/3. Functionally, catalyzes the condensation of carbamoyl phosphate and aspartate to form carbamoyl aspartate and inorganic phosphate, the committed step in the de novo pyrimidine nucleotide biosynthesis pathway. In Methylibium petroleiphilum (strain ATCC BAA-1232 / LMG 22953 / PM1), this protein is Aspartate carbamoyltransferase catalytic subunit.